Consider the following 424-residue polypeptide: Gamma-glutamyl phosphate reductase (424 aa).

It belongs to the gamma-glutamyl phosphate reductase family.

It localises to the cytoplasm. It catalyses the reaction L-glutamate 5-semialdehyde + phosphate + NADP(+) = L-glutamyl 5-phosphate + NADPH + H(+). It functions in the pathway amino-acid biosynthesis; L-proline biosynthesis; L-glutamate 5-semialdehyde from L-glutamate: step 2/2. In terms of biological role, catalyzes the NADPH-dependent reduction of L-glutamate 5-phosphate into L-glutamate 5-semialdehyde and phosphate. The product spontaneously undergoes cyclization to form 1-pyrroline-5-carboxylate. This is Gamma-glutamyl phosphate reductase from Dehalococcoides mccartyi (strain ATCC BAA-2100 / JCM 16839 / KCTC 5957 / BAV1).